Reading from the N-terminus, the 137-residue chain is SMR2 protein (137 aa).

An N-terminal signal peptide occupies residues 1 to 18 (MLVVLLTAALLALSSAQN). The segment at 14–113 (SSAQNTDEEV…LHHRENLRPQ (100 aa)) is disordered. Residues 75–85 (QQQQPLPVENQ) show a composition bias toward low complexity. Residues 99–110 (PPPETLHHRENL) show a composition bias toward basic and acidic residues.

It localises to the secreted. Its function is as follows. Unknown, male-specific function. The protein is SMR2 protein (Smr2) of Rattus norvegicus (Rat).